The sequence spans 35 residues: Delta-theraphotoxin-Hm1a (35 aa).

3 disulfide bridges follow: Cys-2–Cys-16, Cys-9–Cys-21, and Cys-15–Cys-28.

It belongs to the neurotoxin 10 (Hwtx-1) family. 09 (HaTx) subfamily. Expressed by the venom gland.

Its subcellular location is the secreted. In terms of biological role, gating-modifier toxin that potently inhibits inactivation of the mammalian Nav1.1/SCN1A sodium channel (EC(50)=38 nM). Also moderately inhibits inactivation of Nav1.2/SCN2A (EC(50)=236 nM) and Nav1.3/SCN3A (EC(50)=220 nM) when the channels are expressed in oocytes without the beta-1 auxiliary subunit. Does not inhibit inactivation of Nav1.2/SCN2A when the channel is coexpressed with the beta-1 auxiliary subunit. When tested on Nav1.1/SCN1A channel, it enhances peak current amplitude and potently delays channel inactivation in a dose-dependent manner, leading to a large sustained current. It has no effect on the voltage-dependence of steady-state activation, and induces a depolarizing shift in the voltage dependence of inactivation. In addition, it does not modify the recovery from fast inactivation in Nav1.1/SCN1A. The binding affinity and subtype selectivity of the toxin towards Nav1.1/SCN1A channel is determined by residues within both the S1-S2 and S3-S4 loops of the domain IV voltage sensor of the channel. This toxin also weakly inhibits several subtypes of voltage-gated potassium channels. It moderately blocks Kv2.1/KCNB1 (23% inhibition at 100 nM), Kv2.2/KCNB2 (19.7% at 100 nM and 51% at 300 nM), Kv4.1/KCND1 (IC(50)=280 nM), Kv4.2/KCND2 (39% at 300 nM) and Kv4.3/KCND3 (43% at 300 nM). In vivo, intracerebroventricular injection into mice elicits convulsions, spasms, tremors and rapid death. When injected into mouse hindpaw, the toxin elicits an immediate and robust response to pain. However, intraplantar injection of toxin does not cause neurogenic inflammation or alter sensitivity to heat, indicative of a modality-specific effect on mechanosensitive neurons. In Dravet syndrome mice model, intracerebroventricular infusion of this peptide rescues mice from seizures and premature death. This is Delta-theraphotoxin-Hm1a from Heteroscodra maculata (Togo starburst tarantula).